A 663-amino-acid polypeptide reads, in one-letter code: Probable peptidyl-glycine alpha-amidating monooxygenase pamn-1 (663 aa).

An N-terminal signal peptide occupies residues 1–21; that stretch reads MNDRISINLIYLVLTFCCVSA. Positions 1 to 300 are peptidylglycine alpha-hydroxylating monooxygenase; that stretch reads MNDRISINLI…YDAKLDNPYP (300 aa). Cu(2+) contacts are provided by His75 and His76. Residues Cys82 and Cys98 are joined by a disulfide bond. Residue His142 participates in Cu(2+) binding. Asn191 carries N-linked (GlcNAc...) asparagine glycosylation. Disulfide bonds link Cys194–Cys305 and Cys261–Cys283. Positions 210 and 212 each coordinate Cu(2+). N-linked (GlcNAc...) asparagine glycosylation is present at Asn269. Met282 contacts Cu(2+). The interval 301-663 is peptidyl-alpha-hydroxyglycine alpha-amidating lyase; sequence QGAICAKDYP…WQFKIRHDQN (363 aa). Arg376 contributes to the a protein binding site. Asn411 is a glycosylation site (N-linked (GlcNAc...) asparagine). NHL repeat units lie at residues 411 to 454, 464 to 507, 511 to 554, and 626 to 656; these read NQTK…WKIE, SGEL…LDLN, IRQF…MTTQ, and FGQPHCLRVCPDGGHIFVGDIAEGKARLWQF. The cysteines at positions 478 and 497 are disulfide-linked. A protein is bound by residues Tyr496 and Arg543.

The protein in the C-terminal section; belongs to the peptidyl-alpha-hydroxyglycine alpha-amidating lyase family. It in the N-terminal section; belongs to the copper type II ascorbate-dependent monooxygenase family. In terms of assembly, monomer. The cofactor is Zn(2+). Cu(2+) is required as a cofactor.

It localises to the secreted. It catalyses the reaction a [peptide]-C-terminal glycine + 2 L-ascorbate + O2 = a [peptide]-C-terminal (2S)-2-hydroxyglycine + 2 monodehydro-L-ascorbate radical + H2O. The catalysed reaction is a [peptide]-C-terminal (2S)-2-hydroxyglycine = a [peptide]-C-terminal amide + glyoxylate. In terms of biological role, probable bifunctional enzyme that catalyzes 2 sequential steps in C-terminal alpha-amidation of peptides. The monooxygenase part produces an unstable peptidyl(2-hydroxyglycine) intermediate that is dismutated to glyoxylate and the corresponding desglycine peptide amide by the lyase part. C-terminal amidation of peptides such as neuropeptides is essential for full biological activity. The chain is Probable peptidyl-glycine alpha-amidating monooxygenase pamn-1 from Caenorhabditis elegans.